Reading from the N-terminus, the 492-residue chain is MPARAIMFQGTGSDVGKSLIVAGLARALTLRGLKVAPFKPQNMSNNAAVTADGGEIGRAQALQARAARRPMTVHMNPVLLKPQSEIGSQVVVQGRVIGNAKASAYQAMKPQLMKAVLDSFHHLIADTDIALVEGAGSASEINLRAGDIANMGFAQATQIPVVLIGDIDRGGVIASLVGTQAVLAPDDAALIAGFLVNKFRGDPALFASGMSEIATRTRWTSLGLIPHFADARRLPAEDALGLPGGGVWSRDRPKIAVLAYPRISNFDEFDPLRLEDGVDLQFLRPGTPIPGDAAVVILPGSKATIADLAALREAGWDIDLQAHLRRGGRVLGICGGYQMLGRMISDPDGHEGAPGAVAGLGLLDIETTLTGDKALRDVEGRLTQDEAPFRGYEMHIGRTDGPAAQHPFLVFSDGRRDGAVAAGGQIAGCYVHGLFADDHLRAHWLRGLGTTASGQSYDADVDATLDALAAHLERYIDIDRILDLARVPRAIT.

In terms of domain architecture, GATase cobBQ-type spans 252 to 440; the sequence is RPKIAVLAYP…VHGLFADDHL (189 aa). The Nucleophile role is filled by Cys-334. His-432 is a catalytic residue.

Belongs to the CobB/CobQ family. CobQ subfamily.

It participates in cofactor biosynthesis; adenosylcobalamin biosynthesis. Catalyzes amidations at positions B, D, E, and G on adenosylcobyrinic A,C-diamide. NH(2) groups are provided by glutamine, and one molecule of ATP is hydrogenolyzed for each amidation. The polypeptide is Cobyric acid synthase (Bradyrhizobium sp. (strain BTAi1 / ATCC BAA-1182)).